Consider the following 37-residue polypeptide: Large ribosomal subunit protein bL36 (37 aa).

It belongs to the bacterial ribosomal protein bL36 family.

This chain is Large ribosomal subunit protein bL36, found in Desulforudis audaxviator (strain MP104C).